The primary structure comprises 534 residues: Flavonoid-6-hydroxylase (534 aa).

A helical transmembrane segment spans residues 3–23 (FISFVYTLIAFSSLLYFYLIW). Cys-467 lines the heme pocket.

The protein belongs to the cytochrome P450 family. Heme serves as cofactor. In terms of tissue distribution, expressed in leaves.

It is found in the membrane. The catalysed reaction is genkwanin + reduced [NADPH--hemoprotein reductase] + O2 = scutellarein 7-methyl ether + oxidized [NADPH--hemoprotein reductase] + H2O. It catalyses the reaction (2S)-sakuranetin + reduced [NADPH--hemoprotein reductase] + O2 = (2S)-7-methylcarthamidin + oxidized [NADPH--hemoprotein reductase] + H2O + H(+). The enzyme catalyses apigenin 4',7-dimethyl ether + reduced [NADPH--hemoprotein reductase] + O2 = ladanein + oxidized [NADPH--hemoprotein reductase] + H2O + H(+). It carries out the reaction (2S)-naringenin 4',7-dimethyl ether + reduced [NADPH--hemoprotein reductase] + O2 = (2S)-carthamidin-4',7-dimethyl ether + oxidized [NADPH--hemoprotein reductase] + H2O + H(+). It functions in the pathway flavonoid metabolism. In terms of biological role, hydroxylase involved in the biosynthesis of polymethoxylated flavonoids natural products such as nevadensin and salvigenin, aroma compounds which contribute to the flavor of sweet basil, and exhibit pharmacological activities such as anti-allergic, anti-oxidant, antibacterial, anti-proliferative, and anti-inflammatory effects. Catalyzes the 6-hydroxylation of 7-O-methylated precursors such as the conversion of genkwanin (GENK) to scutellarein-7-methyl ether (SCU7Me). Can also use, with a lower efficiency, apigenin-7,4'-dimethyl ether (AdM), naringenin-7-methyl ether (SAK) and naringenin-7,4'-dimethyl ether (NdM) as substrates. This Ocimum basilicum (Sweet basil) protein is Flavonoid-6-hydroxylase.